Reading from the N-terminus, the 440-residue chain is Chitinase-like protein Idgf2 (440 aa).

Positions 1–20 are cleaved as a signal peptide; that stretch reads MKAWIWFTFVACLFAASTEA. The 419-residue stretch at 22–440 folds into the GH18 domain; that stretch reads SNLVCYYDSS…PILRAIKYRL (419 aa). An intrachain disulfide couples Cys26 to Cys53. Asn220 carries an N-linked (GlcNAc...) asparagine glycan. Cys342 and Cys425 are oxidised to a cystine.

The protein belongs to the glycosyl hydrolase 18 family. IDGF subfamily. Post-translationally, glycosylated. As to expression, primarily expressed in yolk cells and fat body. In larvae, it is expressed in the imaginal ring and weakly expressed in imaginal disks. More strongly expressed than Idgf1 and Idgf3.

It is found in the secreted. Functionally, cooperates with insulin-like peptides to stimulate the proliferation, polarization and motility of imaginal disk cells. May act by stabilizing the binding of insulin-like peptides to its receptor through a simultaneous interaction with both molecules to form a multiprotein signaling complex. This Drosophila melanogaster (Fruit fly) protein is Chitinase-like protein Idgf2 (Idgf2).